We begin with the raw amino-acid sequence, 266 residues long: bZIP transcription factor 12 (266 aa).

A bZIP domain is found at 184 to 248 (AMQRQKRMIK…KELKEMVVPV (65 aa)). The interval 187 to 205 (RQKRMIKNRESAARSRERK) is basic motif. A coiled-coil region spans residues 202 to 244 (RERKQAYIAELESLVTQLEEENAKMFKEQEEQHQKRLKELKEM). The tract at residues 212–219 (LESLVTQL) is leucine-zipper.

The protein resides in the nucleus. Transcription activator that binds to the ABA-responsive elements (ABREs) in vitro. Involved in abiotic stress responses and abscisic acid (ABA) signaling. Involved in the signaling pathway that induces growth inhibition in response to D-allose. The polypeptide is bZIP transcription factor 12 (Oryza sativa subsp. japonica (Rice)).